A 187-amino-acid chain; its full sequence is Elongation factor P (187 aa).

This sequence belongs to the elongation factor P family.

It is found in the cytoplasm. The protein operates within protein biosynthesis; polypeptide chain elongation. Its function is as follows. Involved in peptide bond synthesis. Stimulates efficient translation and peptide-bond synthesis on native or reconstituted 70S ribosomes in vitro. Probably functions indirectly by altering the affinity of the ribosome for aminoacyl-tRNA, thus increasing their reactivity as acceptors for peptidyl transferase. In Brachyspira hyodysenteriae (strain ATCC 49526 / WA1), this protein is Elongation factor P.